The sequence spans 607 residues: Elongation factor 4 (607 aa).

The tr-type G domain occupies 11–193 (EKIRNFSIIA…QIVEKVPAPQ (183 aa)). GTP-binding positions include 23–28 (DHGKST) and 140–143 (NKID).

This sequence belongs to the TRAFAC class translation factor GTPase superfamily. Classic translation factor GTPase family. LepA subfamily.

Its subcellular location is the cell membrane. The enzyme catalyses GTP + H2O = GDP + phosphate + H(+). Its function is as follows. Required for accurate and efficient protein synthesis under certain stress conditions. May act as a fidelity factor of the translation reaction, by catalyzing a one-codon backward translocation of tRNAs on improperly translocated ribosomes. Back-translocation proceeds from a post-translocation (POST) complex to a pre-translocation (PRE) complex, thus giving elongation factor G a second chance to translocate the tRNAs correctly. Binds to ribosomes in a GTP-dependent manner. This chain is Elongation factor 4, found in Lactococcus lactis subsp. cremoris (strain SK11).